The chain runs to 525 residues: GMP synthase [glutamine-hydrolyzing] (525 aa).

One can recognise a Glutamine amidotransferase type-1 domain in the interval 9-207 (RILILDFGSQ…VRDICQCEAL (199 aa)). The active-site Nucleophile is the Cys-86. Catalysis depends on residues His-181 and Glu-183. The 193-residue stretch at 208 to 400 (WTPAKIIDDA…LGLPYDMLYR (193 aa)) folds into the GMPS ATP-PPase domain. An ATP-binding site is contributed by 235–241 (SGGVDSS).

Homodimer.

It catalyses the reaction XMP + L-glutamine + ATP + H2O = GMP + L-glutamate + AMP + diphosphate + 2 H(+). It participates in purine metabolism; GMP biosynthesis; GMP from XMP (L-Gln route): step 1/1. Functionally, catalyzes the synthesis of GMP from XMP. The protein is GMP synthase [glutamine-hydrolyzing] of Salmonella paratyphi B (strain ATCC BAA-1250 / SPB7).